A 177-amino-acid polypeptide reads, in one-letter code: Ribosome rescue factor SmrB (177 aa).

The Smr domain occupies 98-173 (LDMHGMKQDE…GAGAILVLLS (76 aa)).

The protein belongs to the SmrB family. As to quaternary structure, associates with collided ribosomes, but not with correctly translating polysomes.

Its function is as follows. Acts as a ribosome collision sensor. Detects stalled/collided disomes (pairs of ribosomes where the leading ribosome is stalled and a second ribosome has collided with it) and endonucleolytically cleaves mRNA at the 5' boundary of the stalled ribosome. Stalled/collided disomes form a new interface (primarily via the 30S subunits) that binds SmrB. Cleaved mRNA becomes available for tmRNA ligation, leading to ribosomal subunit dissociation and rescue of stalled ribosomes. This chain is Ribosome rescue factor SmrB, found in Aliivibrio fischeri (strain ATCC 700601 / ES114) (Vibrio fischeri).